The following is a 162-amino-acid chain: Protein LTO1 (162 aa).

Residues 17 to 53 (GFLEGQNENIKQSFLEGKQYGLQVGFQRFTLLGQMEG) are deca-GX3 motif; required for interaction with YAE1 and the CIA complex.

This sequence belongs to the LTO1 family. In terms of assembly, forms a complex with YAE1; the complex bridges the interaction between the CIA complex and RLI1. Associates with the CIA complex (via its C-terminal tryptophan).

It is found in the nucleus. Its function is as follows. Essential for life in oxygen, but nonessential under anaerobic conditions. Required for biogenesis of the large ribosomal subunit and initiation of translation in oxygen. The complex LTO1:YAE1 functions as a target specific adapter that recruits apo-RLI1 to the cytosolic iron-sulfur protein assembly (CIA) complex machinery. The sequence is that of Protein LTO1 from Saccharomyces cerevisiae (strain ATCC 204508 / S288c) (Baker's yeast).